The following is a 60-amino-acid chain: Large ribosomal subunit protein uL30 (60 aa).

Belongs to the universal ribosomal protein uL30 family. Part of the 50S ribosomal subunit.

The polypeptide is Large ribosomal subunit protein uL30 (Ralstonia pickettii (strain 12J)).